A 632-amino-acid polypeptide reads, in one-letter code: Golgin subfamily A member 8J (632 aa).

Residues M1 to E76 form a disordered region. Coiled coils occupy residues L86 to R154 and L220 to A421. Composition is skewed to basic and acidic residues over residues K352 to K362 and H427 to P440. Disordered regions lie at residues K352–P377, P423–S452, and L496–E524. A compositionally biased stretch (gly residues) spans L508–G520.

Belongs to the GOLGA8 family.

This is Golgin subfamily A member 8J (GOLGA8J) from Homo sapiens (Human).